A 199-amino-acid chain; its full sequence is NAD(P)H dehydrogenase (quinone) (199 aa).

Residues 4–190 (ILVLYYSMYG…TIARYQGEHV (187 aa)) form the Flavodoxin-like domain. FMN-binding positions include 10–15 (SMYGHI) and 79–81 (TRF). An NAD(+)-binding site is contributed by Tyr12. Residue Trp99 participates in substrate binding. FMN contacts are provided by residues 114–119 (STGTGG) and His134.

This sequence belongs to the WrbA family. FMN serves as cofactor.

The enzyme catalyses a quinone + NADH + H(+) = a quinol + NAD(+). It catalyses the reaction a quinone + NADPH + H(+) = a quinol + NADP(+). The sequence is that of NAD(P)H dehydrogenase (quinone) from Serratia proteamaculans (strain 568).